We begin with the raw amino-acid sequence, 203 residues long: Probable nicotinate-nucleotide adenylyltransferase (203 aa).

It belongs to the NadD family.

It carries out the reaction nicotinate beta-D-ribonucleotide + ATP + H(+) = deamido-NAD(+) + diphosphate. The protein operates within cofactor biosynthesis; NAD(+) biosynthesis; deamido-NAD(+) from nicotinate D-ribonucleotide: step 1/1. In terms of biological role, catalyzes the reversible adenylation of nicotinate mononucleotide (NaMN) to nicotinic acid adenine dinucleotide (NaAD). The polypeptide is Probable nicotinate-nucleotide adenylyltransferase (Prosthecochloris aestuarii (strain DSM 271 / SK 413)).